Consider the following 173-residue polypeptide: Protein GrpE (173 aa).

The segment covering 1–28 (MTEEEKTKSEAEEIEQNNKEEEQEKSVE) has biased composition (basic and acidic residues). Residues 1-30 (MTEEEKTKSEAEEIEQNNKEEEQEKSVEEL) form a disordered region.

The protein belongs to the GrpE family. In terms of assembly, homodimer.

It is found in the cytoplasm. In terms of biological role, participates actively in the response to hyperosmotic and heat shock by preventing the aggregation of stress-denatured proteins, in association with DnaK and GrpE. It is the nucleotide exchange factor for DnaK and may function as a thermosensor. Unfolded proteins bind initially to DnaJ; upon interaction with the DnaJ-bound protein, DnaK hydrolyzes its bound ATP, resulting in the formation of a stable complex. GrpE releases ADP from DnaK; ATP binding to DnaK triggers the release of the substrate protein, thus completing the reaction cycle. Several rounds of ATP-dependent interactions between DnaJ, DnaK and GrpE are required for fully efficient folding. The polypeptide is Protein GrpE (Methanosphaera stadtmanae (strain ATCC 43021 / DSM 3091 / JCM 11832 / MCB-3)).